The primary structure comprises 154 residues: Large ribosomal subunit protein uL13 (154 aa).

This sequence belongs to the universal ribosomal protein uL13 family. Part of the 50S ribosomal subunit.

Functionally, this protein is one of the early assembly proteins of the 50S ribosomal subunit, although it is not seen to bind rRNA by itself. It is important during the early stages of 50S assembly. The chain is Large ribosomal subunit protein uL13 from Rhodopseudomonas palustris (strain ATCC BAA-98 / CGA009).